The chain runs to 215 residues: Cytochrome b6 (215 aa).

A helical membrane pass occupies residues 32 to 52 (IFYCLGGITLTCFLVQVATGF). Cysteine 35 is a binding site for heme c. Positions 86 and 100 each coordinate heme b. Helical transmembrane passes span 90 to 110 (ASMM…TGGF), 116 to 136 (LTWV…VTGY), and 186 to 206 (LHTF…FPMI). The heme b site is built by histidine 187 and histidine 202.

The protein belongs to the cytochrome b family. PetB subfamily. As to quaternary structure, the 4 large subunits of the cytochrome b6-f complex are cytochrome b6, subunit IV (17 kDa polypeptide, PetD), cytochrome f and the Rieske protein, while the 4 small subunits are PetG, PetL, PetM and PetN. The complex functions as a dimer. The cofactor is heme b. It depends on heme c as a cofactor.

The protein localises to the plastid. It localises to the chloroplast thylakoid membrane. Component of the cytochrome b6-f complex, which mediates electron transfer between photosystem II (PSII) and photosystem I (PSI), cyclic electron flow around PSI, and state transitions. This chain is Cytochrome b6, found in Nicotiana tomentosiformis (Tobacco).